The following is a 93-amino-acid chain: Precursor of CEP13 (93 aa).

The first 27 residues, 1-27 (MARPRISISMICLLILIVGFVLQSSQA), serve as a signal peptide directing secretion. The propeptide occupies 28–78 (RKVLVPYGTSKGLFLSALPKGNVPPSGPSDKGHTSPPDDTDQRMVPENSPE). Residues 45-93 (LPKGNVPPSGPSDKGHTSPPDDTDQRMVPENSPEIYRRLESVPSPGVGH) are disordered. 2 positions are modified to hydroxyproline: proline 87 and proline 89.

It belongs to the C-terminally encoded plant signaling peptide (CEP) family. As to quaternary structure, interacts with CEP receptors (e.g. CEPR1 and CEPR2). Post-translationally, the mature small signaling peptide is generated by proteolytic processing of the longer precursor.

The protein resides in the secreted. It is found in the extracellular space. The protein localises to the apoplast. Functionally, extracellular signaling peptide that may regulate primary root growth rate and systemic nitrogen (N)-demand signaling. The polypeptide is Precursor of CEP13 (Arabidopsis thaliana (Mouse-ear cress)).